Consider the following 72-residue polypeptide: UPF0154 protein EF_1734 (72 aa).

Residues 4–26 (GWVVLIAVIALLVGAAGGFFLAR) traverse the membrane as a helical segment.

This sequence belongs to the UPF0154 family.

The protein resides in the membrane. The polypeptide is UPF0154 protein EF_1734 (Enterococcus faecalis (strain ATCC 700802 / V583)).